The chain runs to 504 residues: Anaerobic nitric oxide reductase transcription regulator NorR (504 aa).

A 4-aspartylphosphate modification is found at D57. The region spanning M187–V416 is the Sigma-54 factor interaction domain. ATP-binding positions include G215–E222 and A278–E287. The segment at residues W479–K498 is a DNA-binding region (H-T-H motif).

The protein operates within nitrogen metabolism; nitric oxide reduction. Required for the expression of anaerobic nitric oxide (NO) reductase, acts as a transcriptional activator for at least the norVW operon. Activation also requires sigma-54. This is Anaerobic nitric oxide reductase transcription regulator NorR from Escherichia coli O8 (strain IAI1).